The primary structure comprises 35 residues: UPF0387 membrane protein YohO (35 aa).

Residues 6-26 (IGVIALFLLMAIGGIGGVMLA) form a helical membrane-spanning segment.

The protein belongs to the UPF0387 family.

It localises to the cell inner membrane. In Salmonella paratyphi A (strain ATCC 9150 / SARB42), this protein is UPF0387 membrane protein YohO.